The primary structure comprises 311 residues: Olfactory receptor 4K1 (311 aa).

Residues 1 to 25 lie on the Extracellular side of the membrane; that stretch reads MAHTNESMVSEFVLLGLSNSWGLQL. N5 carries an N-linked (GlcNAc...) asparagine glycan. The chain crosses the membrane as a helical span at residues 26–49; sequence FFFAIFSIVYVTSVLGNVLIIVII. The Cytoplasmic segment spans residues 50–57; that stretch reads SFDSHLNS. The helical transmembrane segment at 58-79 threads the bilayer; the sequence is PMYFLLSNLSFIDICQSNFATP. Topologically, residues 80-100 are extracellular; the sequence is KMLVDFFIERKTISFEGCMAQ. C97 and C189 are joined by a disulfide. The helical transmembrane segment at 101–120 threads the bilayer; it reads IFVLHSFVGSEMMLLVAMAY. At 121–139 the chain is on the cytoplasmic side; the sequence is DRFIAICKPLHYSTIMNRR. A helical membrane pass occupies residues 140-158; it reads LCVIFVSISWAVGVLHSVS. Topologically, residues 159 to 195 are extracellular; the sequence is HLAFTVDLPFCGPNEVDSFFCDLPLVIELACMDTYEM. A helical membrane pass occupies residues 196–219; that stretch reads EIMTLTNSGLISLSCFLALIISYT. The Cytoplasmic segment spans residues 220–235; sequence IILIGVRCRSSSGSSK. The helical transmembrane segment at 236–258 threads the bilayer; it reads ALSTLTAHITVVILFFGPCIYFY. Over 259-269 the chain is Extracellular; the sequence is IWPFSRLPVDK. The helical transmembrane segment at 270–289 threads the bilayer; the sequence is FLSVFYTVCTPLLNPIIYSL. The Cytoplasmic portion of the chain corresponds to 290–311; sequence RNEDVKAAMWKLRNRHVNSWKN.

It belongs to the G-protein coupled receptor 1 family.

The protein resides in the cell membrane. Its function is as follows. Odorant receptor. This Homo sapiens (Human) protein is Olfactory receptor 4K1 (OR4K1).